Here is a 227-residue protein sequence, read N- to C-terminus: Holliday junction branch migration complex subunit RuvA (227 aa).

Positions 1–64 (MFESISGILT…EDALRLFGFS (64 aa)) are domain I. Residues 65-143 (NVQERTLFLS…LTDAASCAQS (79 aa)) form a domain II region. The segment at 144–158 (QTDDRAAHPSNLGCA) is flexible linker. The segment at 159–227 (PHAREIEDLV…HPHAVAPAAE (69 aa)) is domain III.

This sequence belongs to the RuvA family. As to quaternary structure, homotetramer. Forms an RuvA(8)-RuvB(12)-Holliday junction (HJ) complex. HJ DNA is sandwiched between 2 RuvA tetramers; dsDNA enters through RuvA and exits via RuvB. An RuvB hexamer assembles on each DNA strand where it exits the tetramer. Each RuvB hexamer is contacted by two RuvA subunits (via domain III) on 2 adjacent RuvB subunits; this complex drives branch migration. In the full resolvosome a probable DNA-RuvA(4)-RuvB(12)-RuvC(2) complex forms which resolves the HJ.

It is found in the cytoplasm. In terms of biological role, the RuvA-RuvB-RuvC complex processes Holliday junction (HJ) DNA during genetic recombination and DNA repair, while the RuvA-RuvB complex plays an important role in the rescue of blocked DNA replication forks via replication fork reversal (RFR). RuvA specifically binds to HJ cruciform DNA, conferring on it an open structure. The RuvB hexamer acts as an ATP-dependent pump, pulling dsDNA into and through the RuvAB complex. HJ branch migration allows RuvC to scan DNA until it finds its consensus sequence, where it cleaves and resolves the cruciform DNA. The chain is Holliday junction branch migration complex subunit RuvA from Treponema pallidum (strain Nichols).